A 288-amino-acid chain; its full sequence is Acetyl-coenzyme A carboxylase carboxyl transferase subunit beta (288 aa).

A CoA carboxyltransferase N-terminal domain is found at 24-288; sequence LWVKCPESGE…TRTPRASEAA (265 aa).

It belongs to the AccD/PCCB family. As to quaternary structure, acetyl-CoA carboxylase is a heterohexamer composed of biotin carboxyl carrier protein (AccB), biotin carboxylase (AccC) and two subunits each of ACCase subunit alpha (AccA) and ACCase subunit beta (AccD).

Its subcellular location is the cytoplasm. It catalyses the reaction N(6)-carboxybiotinyl-L-lysyl-[protein] + acetyl-CoA = N(6)-biotinyl-L-lysyl-[protein] + malonyl-CoA. Its pathway is lipid metabolism; malonyl-CoA biosynthesis; malonyl-CoA from acetyl-CoA: step 1/1. In terms of biological role, component of the acetyl coenzyme A carboxylase (ACC) complex. Biotin carboxylase (BC) catalyzes the carboxylation of biotin on its carrier protein (BCCP) and then the CO(2) group is transferred by the transcarboxylase to acetyl-CoA to form malonyl-CoA. The sequence is that of Acetyl-coenzyme A carboxylase carboxyl transferase subunit beta from Methylocella silvestris (strain DSM 15510 / CIP 108128 / LMG 27833 / NCIMB 13906 / BL2).